The chain runs to 422 residues: Kynurenine--oxoglutarate transaminase 1 (422 aa).

The substrate site is built by Gly-36 and Asn-185. An N6-(pyridoxal phosphate)lysine modification is found at Lys-247. Arg-398 contributes to the substrate binding site.

The protein belongs to the class-I pyridoxal-phosphate-dependent aminotransferase family. As to quaternary structure, homodimer. The cofactor is pyridoxal 5'-phosphate.

It localises to the cytoplasm. The protein resides in the cytosol. The catalysed reaction is L-kynurenine + 2-oxoglutarate = kynurenate + L-glutamate + H2O. The enzyme catalyses 3-phenylpyruvate + L-glutamine = 2-oxoglutaramate + L-phenylalanine. It carries out the reaction an S-substituted L-cysteine + H2O = a thiol + pyruvate + NH4(+). It participates in amino-acid degradation; L-kynurenine degradation; kynurenate from L-kynurenine: step 1/2. With respect to regulation, inhibited by tryptophan, indole-3-pyruvic acid, 3-indolepropionic acid, DL-indole-3-lactic acid, indole-3-acetic acid (IAC), amino-oxyacetate (AOAA), aminooxy-phenylpropionic acid (AOPP) and Tris. Its function is as follows. Catalyzes the irreversible transamination of the L-tryptophan metabolite L-kynurenine to form kynurenic acid (KA), an intermediate in the tryptophan catabolic pathway which is also a broad spectrum antagonist of the three ionotropic excitatory amino acid receptors among others. Also metabolizes the cysteine conjugates of certain halogenated alkenes and alkanes to form reactive metabolites. Catalyzes the beta-elimination of S-conjugates and Se-conjugates of L-(seleno)cysteine, resulting in the cleavage of the C-S or C-Se bond. The chain is Kynurenine--oxoglutarate transaminase 1 from Homo sapiens (Human).